Consider the following 546-residue polypeptide: MAKQVIFNEQARAALKHGVDTLALAVKTTLGPRGRNVAMGKKWGAPSVTHDGVTVAKEVELKDPFQNMGAQLLKEAASKTNDVAGDGTTTATVLAQAMIDEGLKLVAAGANPMIFKRGLDKGREALVARIKEQSITLKSRDEIRQVATISAQDPEIGELLATIMDKIGHDGVVTIEEGKGTTLEYELVEGMQFDRGYISPYFVTDSSRMEAVIDEPYILITDKKISAVNDLLPILEAVLATGKKDLVIIAEDVDGEALATLVVNKMRGTLNALAVKAPGFGDRRKAMLQDIAILTGGTVISEEVGRKLDSAKVQDLGRARRVKSDKDNTVIVEGFGDKQAIQARIRQLKQQIETTTSDYDREKLQERVAKLSGGVAVIKVGAPTEPALKERKARVEDALNATRAAVEEGIVPGGGIALLNAIPALDNVQTQFEEERMALNILRRALEEPLRQLAINAGEDGSVVVNQVRTLQREHNNPNYGFDVMTGKYVDLMQAGIIDPAKVVRTALENAVSVAGIVLTTDALITDAPEPKKNGARTPSMPEEEF.

ATP-binding positions include 29 to 32 (TLGP), 86 to 90 (DGTTT), Gly-414, and Asp-499.

This sequence belongs to the chaperonin (HSP60) family. In terms of assembly, forms a cylinder of 14 subunits composed of two heptameric rings stacked back-to-back. Interacts with the co-chaperonin GroES.

The protein resides in the cytoplasm. It catalyses the reaction ATP + H2O + a folded polypeptide = ADP + phosphate + an unfolded polypeptide.. Together with its co-chaperonin GroES, plays an essential role in assisting protein folding. The GroEL-GroES system forms a nano-cage that allows encapsulation of the non-native substrate proteins and provides a physical environment optimized to promote and accelerate protein folding. The polypeptide is Chaperonin GroEL 1 (Roseiflexus sp. (strain RS-1)).